Reading from the N-terminus, the 122-residue chain is MPTIKQLIRNTRQPIKNVTKSPALRGCPQRRGTCTRVTITPKKPNSALRKVARVRLTSGFEITAYIPGIGHNSQEHSVVLVRGGRVKDLPGVRYHIVRGTLDAVGVKDRQQGRSKYGVKKPK.

The protein belongs to the universal ribosomal protein uS12 family. In terms of assembly, part of the 30S ribosomal subunit.

The protein resides in the plastid. It is found in the chloroplast. With S4 and S5 plays an important role in translational accuracy. Located at the interface of the 30S and 50S subunits. In Illicium oligandrum (Star anise), this protein is Small ribosomal subunit protein uS12c (rps12).